Reading from the N-terminus, the 136-residue chain is Protein LITTLE ZIPPER 1 (136 aa).

Residues 97–122 adopt a coiled-coil conformation; sequence ENQNIIRENEKLKKKALLLHQENKTL.

As to quaternary structure, interacts with REV. In terms of tissue distribution, expressed in the adaxial epidermis of the cotyledons and in the vascular cylinder of wild-type torpedo stage embryos.

In terms of biological role, competitive inhibitor of the HD-ZIPIII transcription factors in shoot apical meristem (SAM) development. Acts by forming non-functional heterodimers. Part of a negative feedback loop. Essential for proper functioning of stem cells in the SAM. The protein is Protein LITTLE ZIPPER 1 of Arabidopsis thaliana (Mouse-ear cress).